A 383-amino-acid polypeptide reads, in one-letter code: 3-phytase (383 aa).

An N-terminal signal peptide occupies residues 1–26; sequence MNHSKTLLLTAAAGLMLTCGAVSSQA. A propeptide spanning residues 27-29 is cleaved from the precursor; sequence KHK. Residues 30-362 enclose the BPP domain; the sequence is LSDPYHFTVN…VPWERIADQI (333 aa).

Ca(2+) serves as cofactor.

The protein localises to the secreted. It carries out the reaction 1D-myo-inositol hexakisphosphate + H2O = 1D-myo-inositol 1,2,4,5,6-pentakisphosphate + phosphate. Catalyzes the hydrolysis of inorganic orthophosphate from phytate. Only phytate, ADP, and ATP were hydrolyzed (100, 75, and 50% of the relative activity, respectively). In Bacillus subtilis, this protein is 3-phytase (phyC).